A 149-amino-acid chain; its full sequence is MKVILLKDVKGTGKKGEMKEVSDGYARNFLFPKKMAVQADSVAIKELNEKNKSKEIKAQKEYEEAVLLGKQMEEINIEIYSKAGEGGRLFGSITSKEIAEQLKKQKDIDVDKRKILLDEPIRSLGSTFVEIKIHQKVTTKIRVDVKEKQ.

It belongs to the bacterial ribosomal protein bL9 family.

In terms of biological role, binds to the 23S rRNA. The polypeptide is Large ribosomal subunit protein bL9 (Clostridioides difficile (strain 630) (Peptoclostridium difficile)).